Here is a 103-residue protein sequence, read N- to C-terminus: Large ribosomal subunit protein bL21 (103 aa).

It belongs to the bacterial ribosomal protein bL21 family. As to quaternary structure, part of the 50S ribosomal subunit. Contacts protein L20.

In terms of biological role, this protein binds to 23S rRNA in the presence of protein L20. The polypeptide is Large ribosomal subunit protein bL21 (Legionella pneumophila (strain Paris)).